A 71-amino-acid polypeptide reads, in one-letter code: Small ribosomal subunit protein bS21 (71 aa).

The tract at residues tyrosine 38 to tyrosine 71 is disordered. Over residues lysine 46–lysine 59 the composition is skewed to basic residues. Positions leucine 60–tyrosine 71 are enriched in basic and acidic residues.

It belongs to the bacterial ribosomal protein bS21 family.

In Hamiltonella defensa subsp. Acyrthosiphon pisum (strain 5AT), this protein is Small ribosomal subunit protein bS21.